We begin with the raw amino-acid sequence, 359 residues long: MNKIIVGLSGGVDSSTAAAILHHQGYQVEGLTLWLMKGKGQCCSEGMVDAAYICEQLDIPHHIVDTRNLFQANIVDYLVTGYSAGITPLPCSQCNKTVKFGPMLAYGREKLGIDKIATGHYARLDYDSKSDRYLLKRAIDRNKDQSYFLYDLTQYLLAGSVFPLGEMVKSETRRIAAEYGLKTADKPESQDLCLVESSGSMRAFLDKYITPHQGEIVDREGRVLGRHDGVHHYTIGQRKGLGVSAPHPLYVIDLDPAMNKVIVGDRDSATKMESTVKLVNWVSIAPPSTSIRAEVQVRYRSLPVAANIIPLGVNEEKPQDGFRVKLIFEEAVFGITPGQAAVWYEGDILLGGGIIENEK.

ATP-binding positions include 7-14 (GLSGGVDS) and Leu-33. The Nucleophile role is filled by Cys-94. An intrachain disulfide couples Cys-94 to Cys-193. An ATP-binding site is contributed by Gly-119. The interval 143–145 (KDQ) is interaction with tRNA. Cys-193 acts as the Cysteine persulfide intermediate in catalysis. The interaction with tRNA stretch occupies residues 298–299 (RY).

It belongs to the MnmA/TRMU family.

Its subcellular location is the cytoplasm. The enzyme catalyses S-sulfanyl-L-cysteinyl-[protein] + uridine(34) in tRNA + AH2 + ATP = 2-thiouridine(34) in tRNA + L-cysteinyl-[protein] + A + AMP + diphosphate + H(+). Functionally, catalyzes the 2-thiolation of uridine at the wobble position (U34) of tRNA, leading to the formation of s(2)U34. This chain is tRNA-specific 2-thiouridylase MnmA, found in Trichodesmium erythraeum (strain IMS101).